The following is a 545-amino-acid chain: CTP synthase (545 aa).

Residues 1–266 (MTTNYIFVTG…DDYICKRFSL (266 aa)) form an amidoligase domain region. Residue Ser-14 coordinates CTP. Ser-14 provides a ligand contact to UTP. Residues 15-20 (SLGKGI) and Asp-72 contribute to the ATP site. 2 residues coordinate Mg(2+): Asp-72 and Glu-140. CTP-binding positions include 147–149 (DIE), 187–192 (KTKPTQ), and Lys-223. Residues 187-192 (KTKPTQ) and Lys-223 contribute to the UTP site. Residue 239–241 (KDI) coordinates ATP. Residues 291–542 (TIGMVGKYVA…VKAAGAYQKR (252 aa)) enclose the Glutamine amidotransferase type-1 domain. An L-glutamine-binding site is contributed by Gly-352. Catalysis depends on Cys-379, which acts as the Nucleophile; for glutamine hydrolysis. Residues 380–383 (LGMQ), Glu-403, and Arg-470 contribute to the L-glutamine site. Active-site residues include His-515 and Glu-517.

The protein belongs to the CTP synthase family. As to quaternary structure, homotetramer.

It carries out the reaction UTP + L-glutamine + ATP + H2O = CTP + L-glutamate + ADP + phosphate + 2 H(+). It catalyses the reaction L-glutamine + H2O = L-glutamate + NH4(+). The enzyme catalyses UTP + NH4(+) + ATP = CTP + ADP + phosphate + 2 H(+). It functions in the pathway pyrimidine metabolism; CTP biosynthesis via de novo pathway; CTP from UDP: step 2/2. With respect to regulation, allosterically activated by GTP, when glutamine is the substrate; GTP has no effect on the reaction when ammonia is the substrate. The allosteric effector GTP functions by stabilizing the protein conformation that binds the tetrahedral intermediate(s) formed during glutamine hydrolysis. Inhibited by the product CTP, via allosteric rather than competitive inhibition. Catalyzes the ATP-dependent amination of UTP to CTP with either L-glutamine or ammonia as the source of nitrogen. Regulates intracellular CTP levels through interactions with the four ribonucleotide triphosphates. This is CTP synthase from Pectobacterium atrosepticum (strain SCRI 1043 / ATCC BAA-672) (Erwinia carotovora subsp. atroseptica).